The following is a 396-amino-acid chain: L-tyrosine/L-aspartate decarboxylase (396 aa).

K245 bears the N6-(pyridoxal phosphate)lysine mark.

This sequence belongs to the group II decarboxylase family. MfnA subfamily. As to quaternary structure, homodimer. Requires pyridoxal 5'-phosphate as cofactor.

It carries out the reaction L-tyrosine + H(+) = tyramine + CO2. It catalyses the reaction L-aspartate + H(+) = beta-alanine + CO2. Its pathway is cofactor biosynthesis; methanofuran biosynthesis. It participates in cofactor biosynthesis; coenzyme A biosynthesis. With respect to regulation, inhibited by hydroxylamine and O-methylhydroxylamine. Functionally, catalyzes the decarboxylation of L-tyrosine to produce tyramine for methanofuran biosynthesis. Can also catalyze the decarboxylation of L-aspartate to produce beta-alanine for coenzyme A (CoA) biosynthesis. This chain is L-tyrosine/L-aspartate decarboxylase, found in Methanocaldococcus jannaschii (strain ATCC 43067 / DSM 2661 / JAL-1 / JCM 10045 / NBRC 100440) (Methanococcus jannaschii).